A 97-amino-acid polypeptide reads, in one-letter code: Protein transport protein SFT1 (97 aa).

Residues 1 to 74 lie on the Cytoplasmic side of the membrane; that stretch reads MSNSRYSQTE…RLTRSLKAGN (74 aa). In terms of domain architecture, t-SNARE coiled-coil homology spans 7 to 69; sequence SQTESNNDRK…KNSSSRLTRS (63 aa). A helical; Anchor for type IV membrane protein transmembrane segment spans residues 75–94; sequence SIWRMVGLALLIFFILYTLF. Residues 95 to 97 lie on the Lumenal side of the membrane; it reads KLF.

Component of a SNARE complex consisting of SED5, GOS1, YKT6 and SFT1.

The protein localises to the golgi apparatus membrane. In terms of biological role, vesicle SNARE required for retrograde transport within the Golgi complex. This Saccharomyces cerevisiae (strain ATCC 204508 / S288c) (Baker's yeast) protein is Protein transport protein SFT1 (SFT1).